Reading from the N-terminus, the 109-residue chain is Phosphocarrier protein HPr (109 aa).

In terms of domain architecture, HPr spans 22–109 (ELSAVFTIRN…EVFNSGFGEL (88 aa)). Histidine 36 acts as the Pros-phosphohistidine intermediate in catalysis.

It belongs to the HPr family.

The protein resides in the cytoplasm. In terms of biological role, general (non sugar-specific) component of the phosphoenolpyruvate-dependent sugar phosphotransferase system (sugar PTS). This major carbohydrate active-transport system catalyzes the phosphorylation of incoming sugar substrates concomitantly with their translocation across the cell membrane. The phosphoryl group from phosphoenolpyruvate (PEP) is transferred to the phosphoryl carrier protein HPr by enzyme I. Phospho-HPr then transfers it to the PTS EIIA domain. The polypeptide is Phosphocarrier protein HPr (ptsH) (Chlamydia trachomatis serovar D (strain ATCC VR-885 / DSM 19411 / UW-3/Cx)).